A 239-amino-acid polypeptide reads, in one-letter code: Ubiquinone biosynthesis O-methyltransferase (239 aa).

Residues R44, G63, D84, and M128 each coordinate S-adenosyl-L-methionine.

It belongs to the methyltransferase superfamily. UbiG/COQ3 family.

It catalyses the reaction a 3-demethylubiquinol + S-adenosyl-L-methionine = a ubiquinol + S-adenosyl-L-homocysteine + H(+). It carries out the reaction a 3-(all-trans-polyprenyl)benzene-1,2-diol + S-adenosyl-L-methionine = a 2-methoxy-6-(all-trans-polyprenyl)phenol + S-adenosyl-L-homocysteine + H(+). It functions in the pathway cofactor biosynthesis; ubiquinone biosynthesis. Its function is as follows. O-methyltransferase that catalyzes the 2 O-methylation steps in the ubiquinone biosynthetic pathway. This chain is Ubiquinone biosynthesis O-methyltransferase, found in Xanthomonas euvesicatoria pv. vesicatoria (strain 85-10) (Xanthomonas campestris pv. vesicatoria).